Consider the following 118-residue polypeptide: Hydrogenase maturation factor HypA (118 aa).

Position 2 (histidine 2) interacts with Ni(2+). Zn(2+)-binding residues include cysteine 73, cysteine 76, cysteine 90, and cysteine 93.

The protein belongs to the HypA/HybF family.

Involved in the maturation of [NiFe] hydrogenases. Required for nickel insertion into the metal center of the hydrogenase. In Salmonella typhi, this protein is Hydrogenase maturation factor HypA.